Here is a 287-residue protein sequence, read N- to C-terminus: U-megalopygitoxin(8)-Mo12 (287 aa).

A signal peptide spans 1–17 (MNLQYLILSLLSTTVYG). His-284 carries the post-translational modification Histidine amide.

It belongs to the megalysin family. In terms of processing, contains 2 disulfide bonds. As to expression, expressed by the venom apparatus.

Its subcellular location is the secreted. The protein localises to the target cell membrane. In terms of biological role, may function as a large pore-forming protein. This Megalopyge opercularis (Southern flannel moth) protein is U-megalopygitoxin(8)-Mo12.